Consider the following 245-residue polypeptide: tRNA pseudouridine synthase A 1 (245 aa).

Aspartate 53 (nucleophile) is an active-site residue. Substrate is bound at residue tyrosine 111.

It belongs to the tRNA pseudouridine synthase TruA family. As to quaternary structure, homodimer.

It catalyses the reaction uridine(38/39/40) in tRNA = pseudouridine(38/39/40) in tRNA. Formation of pseudouridine at positions 38, 39 and 40 in the anticodon stem and loop of transfer RNAs. This chain is tRNA pseudouridine synthase A 1, found in Clostridium tetani (strain Massachusetts / E88).